The sequence spans 237 residues: Phosphoribosylaminoimidazole-succinocarboxamide synthase (237 aa).

The protein belongs to the SAICAR synthetase family.

It carries out the reaction 5-amino-1-(5-phospho-D-ribosyl)imidazole-4-carboxylate + L-aspartate + ATP = (2S)-2-[5-amino-1-(5-phospho-beta-D-ribosyl)imidazole-4-carboxamido]succinate + ADP + phosphate + 2 H(+). It participates in purine metabolism; IMP biosynthesis via de novo pathway; 5-amino-1-(5-phospho-D-ribosyl)imidazole-4-carboxamide from 5-amino-1-(5-phospho-D-ribosyl)imidazole-4-carboxylate: step 1/2. This Hamiltonella defensa subsp. Acyrthosiphon pisum (strain 5AT) protein is Phosphoribosylaminoimidazole-succinocarboxamide synthase.